A 135-amino-acid polypeptide reads, in one-letter code: Putative pre-16S rRNA nuclease (135 aa).

The protein belongs to the YqgF nuclease family.

It localises to the cytoplasm. Could be a nuclease involved in processing of the 5'-end of pre-16S rRNA. The sequence is that of Putative pre-16S rRNA nuclease from Clostridium novyi (strain NT).